Reading from the N-terminus, the 789-residue chain is Cell pattern formation-associated protein stuA (789 aa).

2 disordered regions span residues 50-131 (PALS…NTVG) and 205-224 (PGGVTSSQPGPQPPTTSVSS). 3 stretches are compositionally biased toward polar residues: residues 55–69 (PTASQPPISGQSYRT), 76–88 (ASHNASARTSLSG), and 115–131 (LDSSAPQEFSIPQNTVG). The HTH APSES-type domain maps to 272–378 (RVTATLWEDE…HNIGGLLYHP (107 aa)). A DNA-binding region (H-T-H motif) is located at residues 306 to 327 (GTKLLNVAGMTRGRRDGILKSE). Disordered regions lie at residues 389 to 459 (QESQ…ASSL), 487 to 543 (SIDT…YAPQ), and 616 to 789 (HDSA…ARRR). Polar residues-rich tracts occupy residues 419–438 (LQTPVPSHMSQPHAMTSQSA), 487–529 (SIDT…SKSY), 620–636 (GYNTNRGSYTYTTNPSV), 645–667 (QLASDMSGSPSQQNGSGRMTPRT), and 676–713 (SGYNTPPRSAAVSSLYNSVSETRGASANGTTDNYSVAS). Positions 731 to 758 (KRMREDDDVDQIVRPDSRGAEYESKRRK) are nuclear localization domain. The segment covering 741 to 754 (QIVRPDSRGAEYES) has biased composition (basic and acidic residues).

It belongs to the EFG1/PHD1/stuA family.

It is found in the nucleus. Functionally, transcription factor that regulates asexual reproduction. Binds the StuA-response elements (StRE) with the consensus sequence 5'-(A/T)CGCG(T/A)N(A/C)-3' at the promoters of target genes. This Aspergillus flavus (strain ATCC 200026 / FGSC A1120 / IAM 13836 / NRRL 3357 / JCM 12722 / SRRC 167) protein is Cell pattern formation-associated protein stuA.